The sequence spans 442 residues: Chromosomal replication initiator protein DnaA (442 aa).

The domain I, interacts with DnaA modulators stretch occupies residues 1 to 68; that stretch reads MDAWPRCLER…ELLAYFVGNG (68 aa). The domain II stretch occupies residues 68 to 104; sequence GDVALAVGSRPRAPEPAPAPVAVPSAPQAAPIVPFAG. The domain III, AAA+ region stretch occupies residues 105–322; that stretch reads NLDSHYTFAN…GALNTLVARA (218 aa). ATP contacts are provided by G150, G152, K153, and T154. The segment at 323 to 442 is domain IV, binds dsDNA; sequence NFTGRSITVE…WEKLIRKLSE (120 aa).

Belongs to the DnaA family. In terms of assembly, oligomerizes as a right-handed, spiral filament on DNA at oriC.

It is found in the cytoplasm. Functionally, plays an essential role in the initiation and regulation of chromosomal replication. ATP-DnaA binds to the origin of replication (oriC) to initiate formation of the DNA replication initiation complex once per cell cycle. Binds the DnaA box (a 9 base pair repeat at the origin) and separates the double-stranded (ds)DNA. Forms a right-handed helical filament on oriC DNA; dsDNA binds to the exterior of the filament while single-stranded (ss)DNA is stabiized in the filament's interior. The ATP-DnaA-oriC complex binds and stabilizes one strand of the AT-rich DNA unwinding element (DUE), permitting loading of DNA polymerase. After initiation quickly degrades to an ADP-DnaA complex that is not apt for DNA replication. Binds acidic phospholipids. In Xanthomonas axonopodis pv. citri (strain 306), this protein is Chromosomal replication initiator protein DnaA.